A 348-amino-acid polypeptide reads, in one-letter code: [LysW]-L-2-aminoadipate 6-phosphate reductase (348 aa).

Residue 14-17 (SGYA) coordinates NADP(+). The active site involves cysteine 151. Asparagine 315 contacts NADP(+).

Belongs to the NAGSA dehydrogenase family. Type 1 subfamily. LysY sub-subfamily.

It localises to the cytoplasm. It carries out the reaction [amino-group carrier protein]-C-terminal-N-(1-carboxy-5-oxopentan-1-yl)-L-glutamine + phosphate + NADP(+) = [amino-group carrier protein]-C-terminal-N-(1-carboxy-5-phosphooxy-5-oxopentan-1-yl)-L-glutamine + NADPH + H(+). Its pathway is amino-acid biosynthesis; L-lysine biosynthesis via AAA pathway; L-lysine from L-alpha-aminoadipate (Thermus route): step 3/5. In terms of biological role, catalyzes the NADPH-dependent reduction of [LysW]-aminoadipate 6-phosphate to yield [LysW]-aminoadipate 6-semialdehyde. This chain is [LysW]-L-2-aminoadipate 6-phosphate reductase, found in Deinococcus radiodurans (strain ATCC 13939 / DSM 20539 / JCM 16871 / CCUG 27074 / LMG 4051 / NBRC 15346 / NCIMB 9279 / VKM B-1422 / R1).